The primary structure comprises 293 residues: Neugrin (293 aa).

The first 15 residues, 1 to 15, serve as a signal peptide directing secretion; the sequence is MALSLSLFLGGRVRA. Disordered stretches follow at residues 25–48 and 162–211; these read QGVA…PEER and PLSA…EKNK. Residue Ser41 is modified to Phosphoserine. N-linked (GlcNAc...) asparagine glycosylation is present at Asn270.

The protein belongs to the neugrin family. Forms a regulatory protein-RNA complex, consisting of RCC1L, NGRN, RPUSD3, RPUSD4, TRUB2, FASTKD2 and 16S mt-rRNA. Interacts with 16S mt-rRNA; this interaction is direct.

It localises to the nucleus. Its subcellular location is the secreted. It is found in the mitochondrion membrane. Plays an essential role in mitochondrial ribosome biogenesis. As a component of a functional protein-RNA module, consisting of RCC1L, NGRN, RPUSD3, RPUSD4, TRUB2, FASTKD2 and 16S mitochondrial ribosomal RNA (16S mt-rRNA), controls 16S mt-rRNA abundance and is required for intra-mitochondrial translation of core subunits of the oxidative phosphorylation system. This is Neugrin (Ngrn) from Rattus norvegicus (Rat).